Here is a 600-residue protein sequence, read N- to C-terminus: Probable pectin methyltransferase QUA3 (600 aa).

Topologically, residues 1–18 (MGHVNLPASKRGNPRQWR) are cytoplasmic. A helical; Signal-anchor for type II membrane protein transmembrane segment spans residues 19-39 (LLDIVTAAFFGIVLLFFILLF). At 40 to 600 (TPLGDSMAAS…SLWKLPSNSH (561 aa)) the chain is on the lumenal side. Asparagine 283 carries N-linked (GlcNAc...) asparagine glycosylation.

Belongs to the methyltransferase superfamily. Highly expressed and abundant in suspension-cultured cells, but low levels in seedlings.

The protein resides in the golgi apparatus membrane. It functions in the pathway glycan metabolism; pectin biosynthesis. In terms of biological role, S-adenosyl-L-methionine (SAM)-dependent methyltransferase (MTase) which mediates the methylesterification of the pectin homogalacturonan (HG) and thus regulates cell wall biosynthesis, at least in suspension-cultured cells. The polypeptide is Probable pectin methyltransferase QUA3 (Arabidopsis thaliana (Mouse-ear cress)).